Here is a 115-residue protein sequence, read N- to C-terminus: Large ribosomal subunit protein uL24 (115 aa).

This sequence belongs to the universal ribosomal protein uL24 family. As to quaternary structure, part of the 50S ribosomal subunit.

In terms of biological role, one of two assembly initiator proteins, it binds directly to the 5'-end of the 23S rRNA, where it nucleates assembly of the 50S subunit. One of the proteins that surrounds the polypeptide exit tunnel on the outside of the subunit. This Phytoplasma mali (strain AT) protein is Large ribosomal subunit protein uL24.